The primary structure comprises 525 residues: BTB/POZ domain-containing protein At1g50280 (525 aa).

Residues 5–79 enclose the BTB domain; that stretch reads NDLKINLNGQ…CYHNGEILID (75 aa). Residues 200–466 enclose the NPH3 domain; the sequence is EWWFEDMTNL…IEALKSRCGN (267 aa).

This sequence belongs to the NPH3 family.

It participates in protein modification; protein ubiquitination. In terms of biological role, may act as a substrate-specific adapter of an E3 ubiquitin-protein ligase complex (CUL3-RBX1-BTB) which mediates the ubiquitination and subsequent proteasomal degradation of target proteins. This is BTB/POZ domain-containing protein At1g50280 from Arabidopsis thaliana (Mouse-ear cress).